Here is a 455-residue protein sequence, read N- to C-terminus: Kynurenine 3-monooxygenase (455 aa).

Belongs to the aromatic-ring hydroxylase family. KMO subfamily. It depends on FAD as a cofactor.

It catalyses the reaction L-kynurenine + NADPH + O2 + H(+) = 3-hydroxy-L-kynurenine + NADP(+) + H2O. The protein operates within cofactor biosynthesis; NAD(+) biosynthesis; quinolinate from L-kynurenine: step 1/3. Its function is as follows. Catalyzes the hydroxylation of L-kynurenine (L-Kyn) to form 3-hydroxy-L-kynurenine (L-3OHKyn). Required for synthesis of quinolinic acid. This chain is Kynurenine 3-monooxygenase, found in Xanthomonas oryzae pv. oryzae (strain MAFF 311018).